A 400-amino-acid polypeptide reads, in one-letter code: Phosphoglycerate kinase (400 aa).

Residues 21–23 (DFN), Arg36, 59–62 (HLGR), Arg119, and Arg160 each bind substrate. ATP-binding positions include Lys211, Glu329, and 356 to 359 (GGDS).

The protein belongs to the phosphoglycerate kinase family. In terms of assembly, monomer.

The protein resides in the cytoplasm. It carries out the reaction (2R)-3-phosphoglycerate + ATP = (2R)-3-phospho-glyceroyl phosphate + ADP. It functions in the pathway carbohydrate degradation; glycolysis; pyruvate from D-glyceraldehyde 3-phosphate: step 2/5. The chain is Phosphoglycerate kinase from Lactiplantibacillus plantarum (strain ATCC BAA-793 / NCIMB 8826 / WCFS1) (Lactobacillus plantarum).